The sequence spans 203 residues: Cbp/p300-interacting transactivator 1 (203 aa).

Disordered stretches follow at residues 1–24 (MPTM…DANQ) and 51–86 (TANG…PSFN). Over residues 61–84 (PTSSSGSTSPIGSPTATPSSKPPS) the composition is skewed to low complexity. Residues 168–177 (LMSLVVELGL) carry the Nuclear export signal motif.

The protein belongs to the CITED family. Homodimer. Binds to RBM14. Interacts (via N-terminus) with HSPA8; the interaction suppresses the association of CITED1 with p300/CBP and SMAD-mediated transcription transactivation. Interacts (via C-terminus) with TOX3 (via HGM box); the interaction increases estrogen-response element (ERE)-dependent transcription and protection against cell death. Interacts with ESR1; the interaction occurs in a estrogen-dependent manner. Interacts (unphosphorylated form preferentially and via C-terminus) with EP300. Interacts (via C-terminus) with CREBBP. Interacts with EGR2. Phosphorylated. Phosphorylation changes in a cell cycle-dependent manner and reduces its transcriptional cofactor activity. In terms of tissue distribution, expressed in calvarial osteoblasts. Expressed in nulliparous mammary epithelial cells; absent in pregnant mice and in lacting mammary glands. Also expressed in mammary tumors (at protein level). Expressed only in melanocytes and testis. Expressed at high levels in the strongly pigmented melanoma cells but at low levels in the weakly pigmented cells.

The protein localises to the nucleus. Its subcellular location is the cytoplasm. Its function is as follows. Transcriptional coactivator of the p300/CBP-mediated transcription complex. Enhances SMAD-mediated transcription by strengthening the functional link between the DNA-binding SMAD transcription factors and the p300/CBP transcription coactivator complex. Stimulates estrogen-dependent transactivation activity mediated by estrogen receptors signaling; stabilizes the interaction of estrogen receptor ESR1 and histone acetyltransferase EP300. Positively regulates TGF-beta signaling through its association with the SMAD/p300/CBP-mediated transcriptional coactivator complex. Induces transcription from estrogen-responsive promoters and protection against cell death. Potentiates EGR2-mediated transcriptional activation activity from the ERBB2 promoter. Acts as an inhibitor of osteoblastic mineralization through a cAMP-dependent parathyroid hormone receptor signaling. May play a role in pigmentation of melanocytes. Associates with chromatin to the estrogen-responsive TGF-alpha promoter region in a estrogen-dependent manner. The protein is Cbp/p300-interacting transactivator 1 (Cited1) of Mus musculus (Mouse).